A 418-amino-acid polypeptide reads, in one-letter code: 3-isopropylmalate dehydratase large subunit (418 aa).

[4Fe-4S] cluster is bound by residues C299, C359, and C362.

It belongs to the aconitase/IPM isomerase family. LeuC type 2 subfamily. Heterodimer of LeuC and LeuD. [4Fe-4S] cluster serves as cofactor.

The enzyme catalyses (2R,3S)-3-isopropylmalate = (2S)-2-isopropylmalate. The protein operates within amino-acid biosynthesis; L-leucine biosynthesis; L-leucine from 3-methyl-2-oxobutanoate: step 2/4. Catalyzes the isomerization between 2-isopropylmalate and 3-isopropylmalate, via the formation of 2-isopropylmaleate. In Oleidesulfovibrio alaskensis (strain ATCC BAA-1058 / DSM 17464 / G20) (Desulfovibrio alaskensis), this protein is 3-isopropylmalate dehydratase large subunit.